The primary structure comprises 232 residues: Ureidoacrylate amidohydrolase RutB (232 aa).

The Proton acceptor role is filled by D26. Residue K135 is part of the active site. The active-site Nucleophile is C168.

It belongs to the isochorismatase family. RutB subfamily.

The enzyme catalyses (Z)-3-ureidoacrylate + H2O + H(+) = (Z)-3-aminoacrylate + NH4(+) + CO2. It carries out the reaction (Z)-3-ureidoacrylate + H2O = (Z)-3-aminoacrylate + carbamate + H(+). The catalysed reaction is (Z)-2-methylureidoacrylate + H2O + H(+) = (Z)-2-methylaminoacrylate + NH4(+) + CO2. Functionally, hydrolyzes ureidoacrylate to form aminoacrylate and carbamate. The carbamate hydrolyzes spontaneously, thereby releasing one of the nitrogen atoms of the pyrimidine ring as ammonia and one of its carbon atoms as CO2. The chain is Ureidoacrylate amidohydrolase RutB from Cronobacter sakazakii (strain ATCC BAA-894) (Enterobacter sakazakii).